Reading from the N-terminus, the 296-residue chain is Nicotinate dehydrogenase FAD-subunit (296 aa).

The 179-residue stretch at Met-1–Ala-179 folds into the FAD-binding PCMH-type domain. FAD-binding positions include Ile-29–Leu-36, Gly-101, Thr-110–Asn-114, Asp-123, Arg-160, Met-169, and Lys-187.

In terms of assembly, heterooctamer of NDHM, NDHL, NDHS and NDHF. Dimer of heterotetramers. FAD is required as a cofactor.

The catalysed reaction is nicotinate + NADP(+) + H2O = 6-hydroxynicotinate + NADPH + H(+). Its pathway is cofactor degradation; nicotinate degradation; 6-hydroxynicotinate from nicotinate: step 1/1. Reversibly inactivated by selenide and sulfide. Not inhibited by cyanide. In terms of biological role, catalyzes the hydroxylation of nicotinate to 6-hydroxynicotinate. Also active against 2-pyrazinecarboxylic acid, but inactive against other nicotinate analogs. The sequence is that of Nicotinate dehydrogenase FAD-subunit (ndhF) from Eubacterium barkeri (Clostridium barkeri).